We begin with the raw amino-acid sequence, 94 residues long: ESAT-6-like protein EsxI (94 aa).

The protein belongs to the WXG100 family. ESAT-6 subfamily.

It is found in the secreted. The protein is ESAT-6-like protein EsxI of Mycobacterium bovis (strain ATCC BAA-935 / AF2122/97).